Consider the following 331-residue polypeptide: POU domain, class 4, transcription factor 3 (331 aa).

Residues 81–97 (TSSSSTVPISHPSSNLP) show a composition bias toward low complexity. The tract at residues 81–108 (TSSSSTVPISHPSSNLPSHHHHHLSHQT) is disordered. Residues 172–249 (DVESDPRELE…VLQAWLEEAE (78 aa)) form the POU-specific domain. Residues 267–326 (RKRKRTSIAAPEKRSLEAYFAIQPRPSSEKIAAIAEKLDLKKNVVRVWFCNQRQKQKRMK) constitute a DNA-binding region (homeobox).

Belongs to the POU transcription factor family. Class-4 subfamily. As to quaternary structure, interaction with ISL1. As to expression, expressed in the nervous system. Expressed in the otic vesicle during embryogenesis. Expressed in the adult retina in a subset of retinal ganglion cells (RGCs), and at a lower level in the adult tectum. Not expressed in the adult olfactory bulb.

The protein resides in the nucleus. The protein localises to the cytoplasm. In terms of biological role, acts as a transcriptional activator. Acts by binding to sequences related to the consensus octamer motif 5'-ATGCAAAT-3' in the regulatory regions of its target genes. May play a role in specifying terminally differentiated neuronal phenotypes. This Danio rerio (Zebrafish) protein is POU domain, class 4, transcription factor 3 (pou4f3).